We begin with the raw amino-acid sequence, 233 residues long: Choline-phosphate cytidylyltransferase (233 aa).

6 residues coordinate CDP-choline: Leu-6, Ala-8, Gly-9, Tyr-80, Ser-85, and Ala-101. Asp-102 contributes to the Mg(2+) binding site. Tyr-187 is a CDP-choline binding site. Mg(2+)-binding residues include Glu-213 and Asp-215.

It belongs to the LicC/PntC cytidylyltransferase family. It depends on Mg(2+) as a cofactor.

It catalyses the reaction phosphocholine + CTP + H(+) = CDP-choline + diphosphate. Its pathway is lipopolysaccharide biosynthesis. Functionally, cytidylyltransferase involved in the biosynthesis of lipopolysaccharides (LPS), a necessary component and antigenic determinant of the outer membrane that has been shown to be an important factor in the host-parasite interaction in a number of Gram-negative species. Catalyzes the activation of phosphocholine (P-Cho) to CDP-choline (CDP-Cho). LicC is critical for the expression of the 6A2-specific epitope. The polypeptide is Choline-phosphate cytidylyltransferase (Haemophilus influenzae (strain ATCC 51907 / DSM 11121 / KW20 / Rd)).